Here is a 709-residue protein sequence, read N- to C-terminus: MATPGSEPQAFAPALSVTALHPHLHQHHQHHQHHQHHGGTGGTGFNLPLNRGLERALEEAANSGGLNLSARKLKEFPRTTAPGHDLSDTVRADLSKNRLVEVPMELCQFVSLEILNLYHNCIRVIPEAIVNLQMLTHLNLSRNQLSALPACLCGLPLKVLIASNNKLGSLPEEIGQLKQLMELDVSCNEITALPQQIGQLKSLRELNVRRNYLKVLPPELVDLPLVKFDFSCNKVLVIPVCFREMKQLQVLLLENNPLQSPPAQICTKGKVHIFKYLSIQACQIKTSDSLYLPTIERPHLHQHVEDSKKDSDSGVGSDNGDKRLSATEPSDEDTVSLNAPMSNIVEEDQTIKEDACHRLTPTKGEFQPKPSILGDSGISGQEREQLAGRADARHSGLMNYIKDQAEDCEELLRIEEDAHWHMEELLNSSKDRELDIAMIEQLREAELLQDPNGLSADIIERSILNLFPMDSGEASEFPDPSLNGQLQLETSPDREVQNDLMLQSNGSQYSPNEIRENSPSVSPTANITAPFGLKPRSGSWCPEEVQGSLQAESSPRRPQLLSRHVFLRPQRNLESIDPQFTIRRKMEQMREEKELVEQLRESIEMRLKVTLHEDLGAALMDGVVLCHLANHVRPRSVASIHVPSPAVPKLSMAKCRRNVENFLEACRKLGVPEEKLCLPHHILEEKGLVKVGTTVQALLDVTVTKALFT.

A compositionally biased stretch (basic residues) spans 24–37 (LHQHHQHHQHHQHH). Residues 24 to 49 (LHQHHQHHQHHQHHGGTGGTGFNLPL) form a disordered region. LRR repeat units lie at residues 60-83 (AANS…TAPG), 86-108 (LSDT…ELCQ), 109-131 (FVSL…AIVN), 132-155 (LQML…LCGL), 157-176 (LKVL…EIGQ), 177-199 (LKQL…QIGQ), 200-223 (LKSL…LVDL), 225-244 (LVKF…CFRE), and 245-268 (MKQL…ICTK). 2 stretches are compositionally biased toward basic and acidic residues: residues 301–312 (HQHVEDSKKDSD) and 381–390 (QEREQLAGRA). A disordered region spans residues 301-390 (HQHVEDSKKD…QEREQLAGRA (90 aa)). A phosphoserine mark is found at Ser395, Ser518, and Ser522. Residues 504–526 (SNGSQYSPNEIRENSPSVSPTAN) form a disordered region. Residue Thr581 is modified to Phosphothreonine. The 114-residue stretch at 589–702 (MREEKELVEQ…TTVQALLDVT (114 aa)) folds into the Calponin-homology (CH) domain.

As to quaternary structure, interacts (via LRR repeats) with unphosphorylated DOCK8 (via DHR-2 domain); the interaction prevents the association between DOCK8 and CDC42.

The protein localises to the cytoplasm. In terms of biological role, acts as a negative regulator of GTPase CDC42 by sequestering CDC42-guanine exchange factor DOCK8. Probably by preventing CDC42 activation, negatively regulates CD4(+) T-cell migration in response to chemokine stimulation. This chain is Leucine-rich repeat and calponin homology domain-containing protein 1 (Lrch1), found in Mus musculus (Mouse).